Here is a 389-residue protein sequence, read N- to C-terminus: Putative F-box/kelch-repeat protein At4g35120 (389 aa).

One can recognise an F-box domain in the interval 24 to 70; sequence SMSISSLPDEIVLSFLALISKSYYRSLSLVSKSFYSLLSSTEIYAAR. Kelch repeat units follow at residues 128–174, 176–225, and 227–273; these read EIYK…FLDG, IYVI…AVSG, and RLYV…MKPI.

This chain is Putative F-box/kelch-repeat protein At4g35120, found in Arabidopsis thaliana (Mouse-ear cress).